The following is a 1189-amino-acid chain: Disabled homolog 2-interacting protein (1189 aa).

The tract at residues 1–75 (MSAGGSARKS…EPSAATPFRV (75 aa)) is disordered. Residues 20 to 38 (LLRRPRLQRQRSRSRSRTR) are compositionally biased toward basic residues. Over residues 39-49 (PARESPQERPG) the composition is skewed to basic and acidic residues. The 102-residue stretch at 101 to 202 (SFRHILPGFR…WMENLRRAVH (102 aa)) folds into the PH domain. The region spanning 193-311 (WMENLRRAVH…AGRQFVEKWY (119 aa)) is the C2 domain. The Ras-GAP domain maps to 387–595 (GKVKDFLTDL…TNMQRFLLEI (209 aa)). A necessary for interaction with AKT1 region spans residues 646–943 (LRDVHTALST…RTPPNLLSTL (298 aa)). Residues 653 to 668 (LSTPGSGQLPGTNDLA) show a composition bias toward polar residues. 2 disordered regions span residues 653–678 (LSTP…SSSI) and 715–742 (RSSG…MANG). The segment covering 669–678 (STPGSGSSSI) has biased composition (low complexity). Polar residues predominate over residues 715 to 731 (RSSGVQPSPARSSSYSE). Ser728 carries the post-translational modification Phosphoserine; by MAP3K5 and RIPK1. At Ser747 the chain carries Phosphoserine. 5 disordered regions span residues 803-823 (AGQT…PQLL), 843-865 (PRGL…NSEE), 895-998 (SLTE…SPNA), 1015-1035 (EDEG…KDEL), and 1164-1189 (RNGI…SSNC). Low complexity predominate over residues 852–865 (EGHSSLSSHSNSEE). The segment covering 919–931 (QPPPPPPPPPPAP) has biased composition (pro residues). Composition is skewed to polar residues over residues 938–955 (NLLS…TLAS) and 966–976 (RLRQQSSSSKG). Phosphoserine is present on residues Ser978 and Ser995. Residues 1023–1035 (PPHRDRLRSKDEL) are compositionally biased toward basic and acidic residues. A coiled-coil region spans residues 1026–1159 (RDRLRSKDEL…SALTQLKERY (134 aa)).

In terms of assembly, on plasma membrane, exists in an inactive form complexed with TNFR1; in response to TNF-alpha, dissociates from TNFR1 complex, translocates to cytoplasm and forms part of an intracellular signaling complex comprising TRADD, RIPK1, TRAF2 and MAP3K5. Interacts with DAB1. Interacts (via NPXY motif) with DAB2 (via PID domain). Interacts (via PH domain) with ERN1. Part of a cytoplasmic complex made of HIPK1, DAB2IP and MAP3K5 in response to TNF-alpha; this complex formation promotes MAP3K5-JNK activation and subsequent apoptosis. Interacts (via N-terminal domain) with JAK2; the interaction occurs in a IFNG/IFN-gamma-dependent manner and inhibits JAK2 autophosphorylation activity. Interacts (via C2 domain) with GSK3B; the interaction stimulates GSK3B kinase activation. Interacts (via C2 domain) with PPP2CA. Interacts (via proline-rich motif) with a regulatory p85 subunit (via SH3 domain) of the PI3K complex; the interaction inhibits the PI3K-AKT complex activity in a TNF-alpha-dependent manner in prostate cancer (PCa) cells. Interacts with AKT1; the interaction is increased in a TNF-alpha-induced manner. Interacts (via C2 domain and active form preferentially) with KDR/VEGFR2 (tyrosine-phosphorylated active form preferentially); the interaction occurs at the late phase of VEGFA response and inhibits KDR/VEGFR2 activity. Interacts (via N-terminus C2 domain) with MAP3K5 ('Ser-966' dephosphorylated form preferentially); the interaction occurs in a TNF-alpha-induced manner. Interacts (via Ras-GAP domain) with the catalytic subunit of protein phosphatase PP2A; the interaction occurs in resting endothelial cells, is further enhanced by TNF-alpha stimulation and is required to bridge PP2A to MAP3K5. Interacts (via C-terminus PER domain) with TRAF2 (via zinc fingers); the interaction occurs in a TNF-alpha-dependent manner. Interacts with 14-3-3 proteins; the interaction occurs in a TNF-alpha-dependent manner. Interacts (via Ras-GAP domain) with RIPK1 (via kinase domain); the interaction occurs in a TNF-alpha-dependent manner. Interacts with RAB40C; acts as a GAP for RAB40C. In terms of processing, in response to TNF-alpha-induction, phosphorylated at Ser-728; phosphorylation leads to a conformational change, and thus, increases its association with 14-3-3 proteins, MAP3K5, RIPK1 and TRAF2 in endothelial cells; also stimulates regulatory p85 subunit sequestring and PI3K-p85 complex activity inhibition. Expressed in endothelial and vascular smooth muscle cells (VSMCs). Expressed in prostate epithelial but poorly in prostate cancer cells. Poorly expressed in medulloblastoma cells compared to cerebellar precursor proliferating progenitor cells (at protein level). Low expression in prostate. Down-regulated in prostate cancer.

It is found in the cytoplasm. Its subcellular location is the cell membrane. It localises to the membrane. The protein localises to the cell projection. The protein resides in the dendrite. In terms of biological role, functions as a scaffold protein implicated in the regulation of a large spectrum of both general and specialized signaling pathways. Involved in several processes such as innate immune response, inflammation and cell growth inhibition, apoptosis, cell survival, angiogenesis, cell migration and maturation. Also plays a role in cell cycle checkpoint control; reduces G1 phase cyclin levels resulting in G0/G1 cell cycle arrest. Mediates signal transduction by receptor-mediated inflammatory signals, such as the tumor necrosis factor (TNF), interferon (IFN) or lipopolysaccharide (LPS). Modulates the balance between phosphatidylinositol 3-kinase (PI3K)-AKT-mediated cell survival and apoptosis stimulated kinase (MAP3K5)-JNK signaling pathways; sequesters both AKT1 and MAP3K5 and counterbalances the activity of each kinase by modulating their phosphorylation status in response to pro-inflammatory stimuli. Acts as a regulator of the endoplasmic reticulum (ER) unfolded protein response (UPR) pathway; specifically involved in transduction of the ER stress-response to the JNK cascade through ERN1. Mediates TNF-alpha-induced apoptosis activation by facilitating dissociation of inhibitor 14-3-3 from MAP3K5; recruits the PP2A phosphatase complex which dephosphorylates MAP3K5 on 'Ser-966', leading to the dissociation of 13-3-3 proteins and activation of the MAP3K5-JNK signaling pathway in endothelial cells. Also mediates TNF/TRAF2-induced MAP3K5-JNK activation, while it inhibits CHUK-NF-kappa-B signaling. Acts a negative regulator in the IFN-gamma-mediated JAK-STAT signaling cascade by inhibiting smooth muscle cell (VSMCs) proliferation and intimal expansion, and thus, prevents graft arteriosclerosis (GA). Acts as a GTPase-activating protein (GAP) for the ADP ribosylation factor 6 (ARF6), Ras and RAB40C. Promotes hydrolysis of the ARF6-bound GTP and thus, negatively regulates phosphatidylinositol 4,5-bisphosphate (PIP2)-dependent TLR4-TIRAP-MyD88 and NF-kappa-B signaling pathways in endothelial cells in response to lipopolysaccharides (LPS). Binds specifically to phosphatidylinositol 4-phosphate (PtdIns4P) and phosphatidylinositol 3-phosphate (PtdIns3P). In response to vascular endothelial growth factor (VEGFA), acts as a negative regulator of the VEGFR2-PI3K-mediated angiogenic signaling pathway by inhibiting endothelial cell migration and tube formation. In the developing brain, promotes both the transition from the multipolar to the bipolar stage and the radial migration of cortical neurons from the ventricular zone toward the superficial layer of the neocortex in a glial-dependent locomotion process. Probable downstream effector of the Reelin signaling pathway; promotes Purkinje cell (PC) dendrites development and formation of cerebellar synapses. Also functions as a tumor suppressor protein in prostate cancer progression; prevents cell proliferation and epithelial-to-mesenchymal transition (EMT) through activation of the glycogen synthase kinase-3 beta (GSK3B)-induced beta-catenin and inhibition of PI3K-AKT and Ras-MAPK survival downstream signaling cascades, respectively. This Homo sapiens (Human) protein is Disabled homolog 2-interacting protein.